Consider the following 94-residue polypeptide: uncharacterized protein (94 aa).

The interval 1–23 is disordered; sequence MVLLAGTRPQGGEARCMIPPPPS.

This is an uncharacterized protein from Homo sapiens (Human).